The following is a 126-amino-acid chain: Large ribosomal subunit protein uL29 (126 aa).

It belongs to the universal ribosomal protein uL29 family.

The polypeptide is Large ribosomal subunit protein uL29 (rpl35) (Dictyostelium discoideum (Social amoeba)).